Here is a 175-residue protein sequence, read N- to C-terminus: Large ribosomal subunit protein uL10 (175 aa).

Belongs to the universal ribosomal protein uL10 family. Part of the ribosomal stalk of the 50S ribosomal subunit. The N-terminus interacts with L11 and the large rRNA to form the base of the stalk. The C-terminus forms an elongated spine to which L12 dimers bind in a sequential fashion forming a multimeric L10(L12)X complex.

Its function is as follows. Forms part of the ribosomal stalk, playing a central role in the interaction of the ribosome with GTP-bound translation factors. In Delftia acidovorans (strain DSM 14801 / SPH-1), this protein is Large ribosomal subunit protein uL10.